Reading from the N-terminus, the 580-residue chain is MNLFAEMRALVLECVDQMVTAGQLPADLNMTNVTVEPPRDAAHGDMATNAAMVLAKPAGKKPRDIAEALAQLLAADARIASAEVAGPGFLNLRIAPTAWRAVLLSVLDKGTDFGRADIGAGQKVNVEYVSANPTGPLHVGHTRGAVFGDALASLLDYAGFDVTREYYINDGGAQVDVLARSVYLRYLEAHGQEVAFPDGTYPGDYLIPVGQQLKDLKGDSYVGQPEEAWLQDIRTFATDAMMDLIRADLKSLGVEMDVFYSEKSLYGTGRIEAAIEDLKSKGLIYDGVLEPPKGKKPEDWEPREQTLFKSTEHGDDVDRPVMKSDGSWTYFAPDIAYHYDKVSRGYDALIDVFGADHGGYVKRMKAAVSALSDGKVPLDIKLTQLVKLFKNGEPFKMSKRAGTFVTLRDVVDQVGPDVARFVMLTRKNDAMLDFDFDKVMEQSRENPVFYVQYAHARVASVMRKAEAAGIAVDMDTLKAADLSLLNHEAELGLIAKLSEWPRLVETAARSNEPHRVAFYLYELSGVFHGLWNRGNDVPELRFVQDDPKVTQAKIALARACSVVIAAGLGILGVTPAQEMR.

Positions 131–141 (ANPTGPLHVGH) match the 'HIGH' region motif.

This sequence belongs to the class-I aminoacyl-tRNA synthetase family. As to quaternary structure, monomer.

The protein resides in the cytoplasm. It carries out the reaction tRNA(Arg) + L-arginine + ATP = L-arginyl-tRNA(Arg) + AMP + diphosphate. This is Arginine--tRNA ligase from Roseobacter denitrificans (strain ATCC 33942 / OCh 114) (Erythrobacter sp. (strain OCh 114)).